Consider the following 110-residue polypeptide: UPF0122 protein lwe1821 (110 aa).

This sequence belongs to the UPF0122 family.

In terms of biological role, might take part in the signal recognition particle (SRP) pathway. This is inferred from the conservation of its genetic proximity to ftsY/ffh. May be a regulatory protein. This is UPF0122 protein lwe1821 from Listeria welshimeri serovar 6b (strain ATCC 35897 / DSM 20650 / CCUG 15529 / CIP 8149 / NCTC 11857 / SLCC 5334 / V8).